Here is a 618-residue protein sequence, read N- to C-terminus: uncharacterized protein (618 aa).

Positions 1-29 (MSFLVLPPEVNSALMFAGAGSGPTLAAAA) are cleaved as a signal peptide. The disordered stretch occupies residues 598 to 618 (SGDNSSGGFNAGNDQSGFFDG).

This sequence belongs to the mycobacterial PPE family.

This is an uncharacterized protein from Mycobacterium tuberculosis (strain ATCC 25618 / H37Rv).